The following is a 380-amino-acid chain: MAKRDYYEILGVSKNATKEEIKKAYRKLSKKYHPDINKEPDAAEKFKEIKEAYEVLSDDQKRAHYDQFGHADPNQGFGGFRSDDFDFGGFSGFSGFDDIFSTFFGGGRRRDPNAPRAGADLQYTMTLTFEEAVFGKETDIEIPREETCNTCHGTGAKPGTKKETCSYCHGTGQISTEQSTPFGRIVNRRTCPYCGGTGQYIKERCTTCGGTGRVKRRKKIHVKIPAGIDDGQQLRVAGQGEPGINGGPPGDLYIVFHVEPHEFFERDGDDIYCEIPLTFAQAALGDEIEVPTLHGKVRLKIPAGTQTGTKFRLKGKGVPNVRGYGYGDQHVIVRVVTPTKLTEKQKQLLREFDQLGGSSMHQGPHGRFFEKVKKAFKGES.

One can recognise a J domain in the interval 5–69 (DYYEILGVSK…QKRAHYDQFG (65 aa)). The CR-type zinc-finger motif lies at 135–217 (GKETDIEIPR…CGGTGRVKRR (83 aa)). Zn(2+) is bound by residues Cys148, Cys151, Cys165, Cys168, Cys191, Cys194, Cys205, and Cys208. 4 CXXCXGXG motif repeats span residues 148–155 (CNTCHGTG), 165–172 (CSYCHGTG), 191–198 (CPYCGGTG), and 205–212 (CTTCGGTG).

Belongs to the DnaJ family. As to quaternary structure, homodimer. The cofactor is Zn(2+).

The protein resides in the cytoplasm. Functionally, participates actively in the response to hyperosmotic and heat shock by preventing the aggregation of stress-denatured proteins and by disaggregating proteins, also in an autonomous, DnaK-independent fashion. Unfolded proteins bind initially to DnaJ; upon interaction with the DnaJ-bound protein, DnaK hydrolyzes its bound ATP, resulting in the formation of a stable complex. GrpE releases ADP from DnaK; ATP binding to DnaK triggers the release of the substrate protein, thus completing the reaction cycle. Several rounds of ATP-dependent interactions between DnaJ, DnaK and GrpE are required for fully efficient folding. Also involved, together with DnaK and GrpE, in the DNA replication of plasmids through activation of initiation proteins. The chain is Chaperone protein DnaJ from Parageobacillus thermoglucosidasius (Geobacillus thermoglucosidasius).